We begin with the raw amino-acid sequence, 352 residues long: MSILAEKLSSILKRYDELTALLSSAEVISDIKKLTELSKEQSSIEEISVASKEYLSVLENIKENKELLEDKELSELAKEELKILEIKKSDLETAIKQLLIPKDPNDDKNIYLELRAGTGGDEAGIFVGDLFKAYCRYADLKKWKVEIVSSSENSVGGYKEIIALIKGKGVYSRLKFEAGTHRVQRVPETESQGRIHTSAITVAIMPEVDDVEVSINSSDLKIEVFRAGGHGGQCVNTTDSAVRITHLPTNISVSMQDEKSQHKNKDKALKILKARLYEKQIEEQQLANAKDRKEQVGSGDRSERIRTYNYPQNRLSEHRINLTLYSLEEIMLSGNLDEVINPLIAHAQSQFE.

N5-methylglutamine is present on Q233. The tract at residues 288 to 309 (NAKDRKEQVGSGDRSERIRTYN) is disordered. Residues 289–306 (AKDRKEQVGSGDRSERIR) show a composition bias toward basic and acidic residues.

This sequence belongs to the prokaryotic/mitochondrial release factor family. Post-translationally, methylated by PrmC. Methylation increases the termination efficiency of RF1.

It is found in the cytoplasm. In terms of biological role, peptide chain release factor 1 directs the termination of translation in response to the peptide chain termination codons UAG and UAA. This is Peptide chain release factor 1 from Helicobacter pylori (strain Shi470).